A 644-amino-acid polypeptide reads, in one-letter code: Exoribonuclease 2 (644 aa).

Residues 189-516 (REDLTALDFV…NHRLLKAVIK (328 aa)) enclose the RNB domain. Residues 561-643 (DTRFAAEIVD…ETRSIIARPV (83 aa)) form the S1 motif domain.

This sequence belongs to the RNR ribonuclease family. RNase II subfamily.

It localises to the cytoplasm. It catalyses the reaction Exonucleolytic cleavage in the 3'- to 5'-direction to yield nucleoside 5'-phosphates.. Functionally, involved in mRNA degradation. Hydrolyzes single-stranded polyribonucleotides processively in the 3' to 5' direction. The sequence is that of Exoribonuclease 2 from Escherichia coli O127:H6 (strain E2348/69 / EPEC).